The sequence spans 197 residues: UPF0301 protein BAV3012 (197 aa).

Belongs to the UPF0301 (AlgH) family.

The chain is UPF0301 protein BAV3012 from Bordetella avium (strain 197N).